The sequence spans 832 residues: Subtilisin-like protease SBT2.1 (832 aa).

Positions 1–24 (MDESSLVRFVFLLCLVSSSVFCLA) are cleaved as a signal peptide. The propeptide at 25–138 (ESDQNATVSS…VVLDFLVEKA (114 aa)) is activation peptide. N-linked (GlcNAc...) asparagine glycosylation is found at Asn-29 and Asn-73. An Inhibitor I9 domain is found at 36 to 136 (VYIVTLKDRP…ENVVLDFLVE (101 aa)). Residues 145–684 (FLGLPRGAWL…SGFVNATAAL (540 aa)) enclose the Peptidase S8 domain. Asp-172 functions as the Charge relay system in the catalytic mechanism. N-linked (GlcNAc...) asparagine glycosylation is present at Asn-233. His-247 (charge relay system) is an active-site residue. N-linked (GlcNAc...) asparagine glycans are attached at residues Asn-272, Asn-315, Asn-390, Asn-417, Asn-470, Asn-515, and Asn-522. Positions 408–503 (LVLATHALRN…MDIPGILISS (96 aa)) constitute a PA domain. Ser-609 (charge relay system) is an active-site residue. 6 N-linked (GlcNAc...) asparagine glycosylation sites follow: Asn-679, Asn-705, Asn-713, Asn-723, Asn-760, and Asn-801.

The protein belongs to the peptidase S8 family.

It is found in the secreted. The polypeptide is Subtilisin-like protease SBT2.1 (Arabidopsis thaliana (Mouse-ear cress)).